The primary structure comprises 282 residues: Bifunctional protein FolD (282 aa).

163 to 165 (GRS) lines the NADP(+) pocket.

Belongs to the tetrahydrofolate dehydrogenase/cyclohydrolase family. Homodimer.

It catalyses the reaction (6R)-5,10-methylene-5,6,7,8-tetrahydrofolate + NADP(+) = (6R)-5,10-methenyltetrahydrofolate + NADPH. The enzyme catalyses (6R)-5,10-methenyltetrahydrofolate + H2O = (6R)-10-formyltetrahydrofolate + H(+). It participates in one-carbon metabolism; tetrahydrofolate interconversion. In terms of biological role, catalyzes the oxidation of 5,10-methylenetetrahydrofolate to 5,10-methenyltetrahydrofolate and then the hydrolysis of 5,10-methenyltetrahydrofolate to 10-formyltetrahydrofolate. This chain is Bifunctional protein FolD, found in Leuconostoc citreum (strain KM20).